We begin with the raw amino-acid sequence, 255 residues long: Malonyl-[acyl-carrier protein] O-methyltransferase (255 aa).

This sequence belongs to the methyltransferase superfamily.

The catalysed reaction is malonyl-[ACP] + S-adenosyl-L-methionine = malonyl-[ACP] methyl ester + S-adenosyl-L-homocysteine. Its pathway is cofactor biosynthesis; biotin biosynthesis. Functionally, converts the free carboxyl group of a malonyl-thioester to its methyl ester by transfer of a methyl group from S-adenosyl-L-methionine (SAM). It allows to synthesize pimeloyl-ACP via the fatty acid synthetic pathway. The polypeptide is Malonyl-[acyl-carrier protein] O-methyltransferase (Acinetobacter baylyi (strain ATCC 33305 / BD413 / ADP1)).